The following is a 434-amino-acid chain: Serine hydroxymethyltransferase (434 aa).

120–122 is a (6S)-5,6,7,8-tetrahydrofolate binding site; that stretch reads GHI. An N6-(pyridoxal phosphate)lysine modification is found at K236. Position 255 (E255) interacts with (6S)-5,6,7,8-tetrahydrofolate.

It belongs to the SHMT family. In terms of assembly, homodimer. It depends on pyridoxal 5'-phosphate as a cofactor.

It is found in the cytoplasm. The protein operates within amino-acid biosynthesis; glycine biosynthesis; glycine from L-serine: step 1/1. Functionally, catalyzes the reversible interconversion of serine and glycine with a modified folate serving as the one-carbon carrier. Also exhibits a pteridine-independent aldolase activity toward beta-hydroxyamino acids, producing glycine and aldehydes, via a retro-aldol mechanism. The chain is Serine hydroxymethyltransferase from Korarchaeum cryptofilum (strain OPF8).